Here is a 208-residue protein sequence, read N- to C-terminus: V-type ATP synthase subunit E (208 aa).

The protein belongs to the V-ATPase E subunit family.

In terms of biological role, produces ATP from ADP in the presence of a proton gradient across the membrane. The protein is V-type ATP synthase subunit E of Chlamydia felis (strain Fe/C-56) (Chlamydophila felis).